A 747-amino-acid chain; its full sequence is Histone-lysine N-methyltransferase EZH1 (747 aa).

Positions 186-229 are disordered; the sequence is YSDEDEEGHNDTSDGKQDDSKEDLPVTRKRKRHAIEGSKKSSKK. Positions 194 to 211 are enriched in basic and acidic residues; that stretch reads HNDTSDGKQDDSKEDLPV. Lys327 is covalently cross-linked (Glycyl lysine isopeptide (Lys-Gly) (interchain with G-Cter in SUMO2)). The interval 375 to 421 is disordered; it reads TSASAVAETKEGDSDRDTGNDWASSSSEANSRCQTPTKQKASPAPPQ. The span at 382 to 393 shows a compositional bias: basic and acidic residues; it reads ETKEGDSDRDTG. Polar residues predominate over residues 395–414; sequence DWASSSSEANSRCQTPTKQK. Positions 504–606 constitute a CXC domain; it reads CRKIQLKKDN…CKVVSCKNCS (103 aa). An SET domain is found at 613-728; sequence KHLLLAPSDV…AGEELFFDYR (116 aa).

It belongs to the class V-like SAM-binding methyltransferase superfamily. Histone-lysine methyltransferase family. EZ subfamily. As to quaternary structure, component of the PRC2/EED-EZH1 complex, which includes EED, EZH1, SUZ12, RBBP4 and AEBP2. The PRC2/EED-EZH1 is less abundant than the PRC2/EED-EZH2 complex, has weak methyltransferase activity and compacts chromatin in the absence of the methyltransferase cofactor S-adenosyl-L-methionine (SAM). Interacts with EZHIP; the interaction blocks EZH1 methyltransferase activity.

Its subcellular location is the nucleus. It carries out the reaction L-lysyl(27)-[histone H3] + 3 S-adenosyl-L-methionine = N(6),N(6),N(6)-trimethyl-L-lysyl(27)-[histone H3] + 3 S-adenosyl-L-homocysteine + 3 H(+). Functionally, polycomb group (PcG) protein. Catalytic subunit of the PRC2/EED-EZH1 complex, which methylates 'Lys-27' of histone H3, leading to transcriptional repression of the affected target gene. Able to mono-, di- and trimethylate 'Lys-27' of histone H3 to form H3K27me1, H3K27me2 and H3K27me3, respectively. Required for embryonic stem cell derivation and self-renewal, suggesting that it is involved in safeguarding embryonic stem cell identity. Compared to EZH2-containing complexes, it is less abundant in embryonic stem cells, has weak methyltransferase activity and plays a less critical role in forming H3K27me3, which is required for embryonic stem cell identity and proper differentiation. The polypeptide is Histone-lysine N-methyltransferase EZH1 (EZH1) (Bos taurus (Bovine)).